Consider the following 315-residue polypeptide: Methionyl-tRNA formyltransferase (315 aa).

113–116 serves as a coordination point for (6S)-5,6,7,8-tetrahydrofolate; it reads SLLP.

This sequence belongs to the Fmt family.

It carries out the reaction L-methionyl-tRNA(fMet) + (6R)-10-formyltetrahydrofolate = N-formyl-L-methionyl-tRNA(fMet) + (6S)-5,6,7,8-tetrahydrofolate + H(+). Its function is as follows. Attaches a formyl group to the free amino group of methionyl-tRNA(fMet). The formyl group appears to play a dual role in the initiator identity of N-formylmethionyl-tRNA by promoting its recognition by IF2 and preventing the misappropriation of this tRNA by the elongation apparatus. The polypeptide is Methionyl-tRNA formyltransferase (Shigella boydii serotype 4 (strain Sb227)).